A 539-amino-acid polypeptide reads, in one-letter code: Eukaryotic translation initiation factor 3 subunit L (539 aa).

A PCI domain is found at 306 to 514 (TFSDILLYIQ…IHIADTKVSH (209 aa)).

The protein belongs to the eIF-3 subunit L family. As to quaternary structure, component of the eukaryotic translation initiation factor 3 (eIF-3) complex. The eIF-3 complex interacts with pix.

It is found in the cytoplasm. Component of the eukaryotic translation initiation factor 3 (eIF-3) complex, which is involved in protein synthesis of a specialized repertoire of mRNAs and, together with other initiation factors, stimulates binding of mRNA and methionyl-tRNAi to the 40S ribosome. The eIF-3 complex specifically targets and initiates translation of a subset of mRNAs involved in cell proliferation. The sequence is that of Eukaryotic translation initiation factor 3 subunit L from Drosophila ananassae (Fruit fly).